Here is a 547-residue protein sequence, read N- to C-terminus: Ganoderic acid synthetase CYP5150L8 (547 aa).

A helical membrane pass occupies residues 2 to 22 (PDSSLVLVAIAGAAYIFWLVF). Residue cysteine 487 participates in heme binding.

Belongs to the cytochrome P450 family. Heme serves as cofactor.

The protein resides in the membrane. The enzyme catalyses lanosterol + reduced [NADPH--hemoprotein reductase] + O2 = 26-hydroxylanosterol + oxidized [NADPH--hemoprotein reductase] + H2O + H(+). It catalyses the reaction 26-hydroxylanosterol + reduced [NADPH--hemoprotein reductase] + O2 = 26-oxolanosterol + oxidized [NADPH--hemoprotein reductase] + 2 H2O + H(+). It carries out the reaction 26-oxolanosterol + reduced [NADPH--hemoprotein reductase] + O2 = 3beta-hydroxy-lanosta-8, 24-dien-26-oate + oxidized [NADPH--hemoprotein reductase] + H2O + 2 H(+). Its pathway is secondary metabolite biosynthesis; terpenoid biosynthesis. Cytochrome P450 monooxygenase that is involved in the biosynthesis of ganoderic acids (GA), a group of highly oxygenated lanostane-type triterpenoids which well recognized as a main group of unique bioactive compounds in the medicinal mushroom Ganoderma lucidum. CYP5150L8 alone is able to catalyze the three-step oxidations at C-26 from lanosterol to 3-hydroxy-lanosta-8,24-dien-26-oic acid (also called ganoderic acid Z or HLDOA). The methyl group of lanosterol at C-26 is first oxidized into hydroxyl group to form 3-hydroxy-lanosta-8,24-dien-26-ol (HLDO). The hydroxyl group at C-26 of HLDO is further converted into a formyl group to form 3-hydroxy-lanosta-8,24-dien-26-al (HLDA). Finally, the formyl group is oxidized into a carboxyl group to produce 3-hydroxy-lanosta-8,24-dien-26-oic acid (HLDOA). The polypeptide is Ganoderic acid synthetase CYP5150L8 (Ganoderma lucidum (Ling zhi medicinal fungus)).